Consider the following 240-residue polypeptide: uncharacterized protein (240 aa).

A compositionally biased stretch (polar residues) spans 197 to 210 (PLKSHSASRLNHLT). Positions 197 to 222 (PLKSHSASRLNHLTPSPRPGETPLEN) are disordered.

This is an uncharacterized protein from Caenorhabditis elegans.